Here is a 100-residue protein sequence, read N- to C-terminus: Enhancer of yellow 2 transcription factor (100 aa).

Belongs to the ENY2 family. In terms of assembly, component of the nuclear pore complex (NPC)-associated AMEX complex (anchoring and mRNA export complex), composed of at least e(y)2 and xmas-2. Component of the SAGA transcription coactivator-HAT complexes, at least composed of Ada2b, e(y)2, Pcaf/Gcn5, Taf10 and Nipped-A/Trrap. Within the SAGA complex, e(y)2, Sgf11, and not/nonstop form an additional subcomplex of SAGA called the DUB module (deubiquitination module). Component of the THO complex, composed of at least e(y)2, HPR1, THO2, THOC5, THOC6 and THOC7. Interacts with e(y)1. Interacts with su(Hw) (via zinc fingers). Interacts with xmas-2; required for localization to the nuclear periphery. Interacts with the nuclear pore complex (NPC).

It localises to the nucleus. The protein localises to the nucleoplasm. It is found in the cytoplasm. Involved in mRNA export coupled transcription activation by association with both the AMEX and the SAGA complexes. The SAGA complex is a multiprotein complex that activates transcription by remodeling chromatin and mediating histone acetylation and deubiquitination. Within the SAGA complex, participates in a subcomplex that specifically deubiquitinates histone H2B. The SAGA complex is recruited to specific gene promoters by activators, where it is required for transcription. Required for nuclear receptor-mediated transactivation. Involved in transcription elongation by recruiting the THO complex onto nascent mRNA. The AMEX complex functions in docking export-competent ribonucleoprotein particles (mRNPs) to the nuclear entrance of the nuclear pore complex (nuclear basket). AMEX participates in mRNA export and accurate chromatin positioning in the nucleus by tethering genes to the nuclear periphery. The sequence is that of Enhancer of yellow 2 transcription factor from Drosophila persimilis (Fruit fly).